The chain runs to 294 residues: Fatty acyl-CoA reductase Rv0547c (294 aa).

Residues serine 49, serine 50, isoleucine 52, arginine 72, aspartate 97, leucine 98, asparagine 124, tyrosine 192, lysine 196, valine 225, and threonine 227 each contribute to the NADP(+) site. Tyrosine 192 acts as the Proton acceptor in catalysis.

Belongs to the short-chain dehydrogenases/reductases (SDR) family.

The protein localises to the host mitochondrion. It carries out the reaction hexadecanal + NADP(+) + CoA = hexadecanoyl-CoA + NADPH + H(+). Oxidoreductase that promotes the persistence of M.tuberculosis in host macrophages by reprogramming the fatty acid metabolism in host mitochondria. When localized in the host mitochondria, it potentially acts on unknown lipid substrates and converts them into products that directly or indirectly alter the lipid profile of the mitochondria. This change in lipid profile results in increased mitochondrial membrane fluidity, enhanced endogenous fatty acid oxidation and increased mitochondrial spare respiratory capacity. All these events eventually favor M.tuberculosis persistence in the host macrophages. In vitro, can catalyze the NADPH-dependent reduction of palmitoyl-CoA (hexadecanoyl-CoA). The sequence is that of Fatty acyl-CoA reductase Rv0547c from Mycobacterium tuberculosis (strain ATCC 25618 / H37Rv).